The primary structure comprises 227 residues: Transcription antitermination protein NusB (227 aa).

2 disordered regions span residues 165–189 (ASESLDDAPVAPWDDSDALDDSDED) and 201–227 (AEETVEVSEVAEDSEVSKVSEEKADES). Acidic residues-rich tracts occupy residues 178 to 189 (DDSDALDDSDED) and 201 to 214 (AEETVEVSEVAEDS). A compositionally biased stretch (basic and acidic residues) spans 215-227 (EVSKVSEEKADES).

Belongs to the NusB family.

Involved in transcription antitermination. Required for transcription of ribosomal RNA (rRNA) genes. Binds specifically to the boxA antiterminator sequence of the ribosomal RNA (rrn) operons. This is Transcription antitermination protein NusB from Corynebacterium glutamicum (strain ATCC 13032 / DSM 20300 / JCM 1318 / BCRC 11384 / CCUG 27702 / LMG 3730 / NBRC 12168 / NCIMB 10025 / NRRL B-2784 / 534).